The primary structure comprises 249 residues: DNA polymerase sliding clamp (249 aa).

The protein belongs to the PCNA family. In terms of assembly, homotrimer which circularizes head-to-tail (head is a N-terminus, tail is at C-terminus) to form a toroid. RFC opens the toroid so it can load on DNA. Interacts with both Pol I (pol) and Pol II (polB-polC), with Hel308 (hjm) and with Hjc. Interaction with the C-terminal PIP-box of RfcL may stabilize the toroidal structure.

Its function is as follows. Sliding clamp subunit that acts as a moving platform for DNA processing. Responsible for tethering the catalytic subunit of DNA polymerase to DNA during high-speed replication. Unlike its eukaryotic paralog, loads on circular DNA without the replication factor C (RFC) clamp loader, although RFC greatly increases loading efficiency. Stimulates the ATPase activity of replication factor C (RFC) in the presence of ssDNA. Stimulates the helicase activity of Hel308 and may alter its substrate specificity. The polypeptide is DNA polymerase sliding clamp (Pyrococcus furiosus (strain ATCC 43587 / DSM 3638 / JCM 8422 / Vc1)).